A 218-amino-acid polypeptide reads, in one-letter code: Probable septum site-determining protein MinC (218 aa).

The protein belongs to the MinC family. In terms of assembly, interacts with MinD and FtsZ.

In terms of biological role, cell division inhibitor that blocks the formation of polar Z ring septums. Rapidly oscillates between the poles of the cell to destabilize FtsZ filaments that have formed before they mature into polar Z rings. Prevents FtsZ polymerization. The polypeptide is Probable septum site-determining protein MinC (Kosmotoga olearia (strain ATCC BAA-1733 / DSM 21960 / TBF 19.5.1)).